We begin with the raw amino-acid sequence, 404 residues long: Argininosuccinate synthase (404 aa).

15–23 (AYSGGLDTS) contacts ATP. Residue Tyr-94 coordinates L-citrulline. ATP is bound at residue Gly-124. Positions 126, 130, and 131 each coordinate L-aspartate. Asn-130 contributes to the L-citrulline binding site. 4 residues coordinate L-citrulline: Arg-134, Ser-182, Glu-266, and Tyr-278.

It belongs to the argininosuccinate synthase family. Type 1 subfamily. In terms of assembly, homotetramer.

The protein localises to the cytoplasm. It catalyses the reaction L-citrulline + L-aspartate + ATP = 2-(N(omega)-L-arginino)succinate + AMP + diphosphate + H(+). It participates in amino-acid biosynthesis; L-arginine biosynthesis; L-arginine from L-ornithine and carbamoyl phosphate: step 2/3. The polypeptide is Argininosuccinate synthase (Streptomyces avermitilis (strain ATCC 31267 / DSM 46492 / JCM 5070 / NBRC 14893 / NCIMB 12804 / NRRL 8165 / MA-4680)).